Consider the following 409-residue polypeptide: Shaggy-related protein kinase NtK-1 (409 aa).

Residues 1 to 27 form a disordered region; that stretch reads MTSVGLAPVSGLRESSSHSVGVDRLPE. Residues 73–357 enclose the Protein kinase domain; sequence YMAERIVGQG…ALEAVTHAFF (285 aa). Residues 79-87 and lysine 102 each bind ATP; that span reads VGQGSFGVV. Catalysis depends on aspartate 198, which acts as the Proton acceptor.

Belongs to the protein kinase superfamily. CMGC Ser/Thr protein kinase family. GSK-3 subfamily. In terms of processing, autophosphorylated mainly on threonine and serine residues.

The catalysed reaction is L-seryl-[protein] + ATP = O-phospho-L-seryl-[protein] + ADP + H(+). The enzyme catalyses L-threonyl-[protein] + ATP = O-phospho-L-threonyl-[protein] + ADP + H(+). Functionally, may mediate extracellular signals to regulate transcription in differentiating cells. This Nicotiana tabacum (Common tobacco) protein is Shaggy-related protein kinase NtK-1 (NTK-1).